We begin with the raw amino-acid sequence, 723 residues long: Heme/hemopexin utilization protein C (723 aa).

The first 21 residues, 1–21 (MRFSKLSLAITTTLVTANALA), serve as a signal peptide directing secretion. The region spanning 36-147 (DPSRFAYTPE…LGGVVAMRTP (112 aa)) is the TBDR plug domain. A TBDR beta-barrel domain is found at 158 to 723 (KFGVKIRQGY…NAKISAVYSF (566 aa)). A TonB C-terminal box motif is present at residues 706 to 723 (SLMEGTGRNAKISAVYSF).

It belongs to the TonB-dependent receptor family.

It is found in the cell outer membrane. Its function is as follows. Required for utilization of free heme at low concentrations. The polypeptide is Heme/hemopexin utilization protein C (hxuC) (Haemophilus influenzae (strain ATCC 51907 / DSM 11121 / KW20 / Rd)).